We begin with the raw amino-acid sequence, 689 residues long: Elongation factor G (689 aa).

Positions 9–283 (AKFRNIGIMA…AIIEFMPSPL (275 aa)) constitute a tr-type G domain. GTP is bound by residues 18 to 25 (AHIDAGKT), 82 to 86 (DTPGH), and 136 to 139 (NKMD).

Belongs to the TRAFAC class translation factor GTPase superfamily. Classic translation factor GTPase family. EF-G/EF-2 subfamily.

It is found in the cytoplasm. Functionally, catalyzes the GTP-dependent ribosomal translocation step during translation elongation. During this step, the ribosome changes from the pre-translocational (PRE) to the post-translocational (POST) state as the newly formed A-site-bound peptidyl-tRNA and P-site-bound deacylated tRNA move to the P and E sites, respectively. Catalyzes the coordinated movement of the two tRNA molecules, the mRNA and conformational changes in the ribosome. The sequence is that of Elongation factor G from Clostridium botulinum (strain ATCC 19397 / Type A).